The following is a 653-amino-acid chain: Fusexin 1 (653 aa).

The first 23 residues, 1-23, serve as a signal peptide directing secretion; that stretch reads MKNGLKASVVALFFLLAASSASA. Residues 24-559 are Extracellular-facing; it reads ATNSVDTVTY…MEKALSGNAG (536 aa). Cystine bridges form between cysteine 126–cysteine 166, cysteine 397–cysteine 440, cysteine 467–cysteine 490, and cysteine 502–cysteine 519. The interval 154–159 is fusion loop; it reads DTWTGQ. Residues 560–580 traverse the membrane as a helical segment; that stretch reads ALTWAQLLLSFIGFLAGFALV. The Cytoplasmic segment spans residues 581–600; the sequence is GVKLGKMVDGLATEFIPLSD. The next 2 membrane-spanning stretches (helical) occupy residues 601–621 and 622–642; these read AVVR…AVYQ and LVTN…TGYL. Residues 643 to 653 are Cytoplasmic-facing; sequence YLKGTTPDINL.

Belongs to the HAP2/GCS1 family. Fusexin 1 subfamily. In terms of assembly, homotrimer stabilized by interdomain contacts and numerous Ca(2+) and Na(+) ions.

Its subcellular location is the cell surface. It localises to the cell membrane. Its function is as follows. Exhibits fusogenic activity. Mediates cell-cell fusion in mammalian cells (bilateral fusion). This Haloferax sp. (strain Q22) protein is Fusexin 1.